The following is a 449-amino-acid chain: Heterogeneous nuclear ribonucleoprotein H2 (449 aa).

The residue at position 1 (Met1) is an N-acetylmethionine. N-acetylmethionine; in Heterogeneous nuclear ribonucleoprotein H2, N-terminally processed is present on Met2. The region spanning 11–90 (FVVKVRGLPW…RYVEVFKSNS (80 aa)) is the RRM 1 domain. At Ser23 the chain carries Phosphoserine. Lys35 is covalently cross-linked (Glycyl lysine isopeptide (Lys-Gly) (interchain with G-Cter in SUMO2)). 2 positions are modified to phosphoserine: Ser54 and Ser63. Lys87 participates in a covalent cross-link: Glycyl lysine isopeptide (Lys-Gly) (interchain with G-Cter in SUMO2). A Phosphoserine modification is found at Ser90. A Glycyl lysine isopeptide (Lys-Gly) (interchain with G-Cter in SUMO2) cross-link involves residue Lys98. The RRM 2 domain maps to 111–188 (GFVRLRGLPF…RYIEIFKSSR (78 aa)). A Dimethylated arginine; alternate modification is found at Arg233. Arg233 carries the post-translational modification Omega-N-methylarginine; alternate. The stretch at 234 to 249 (GAYGGGYGGYDDYGGY) is one 1-1 repeat. The interval 234–433 (GAYGGGYGGY…YGGQSSMSGY (200 aa)) is 2 X 16 AA Gly-rich approximate repeats. Tyr246 carries the post-translational modification Phosphotyrosine. The 76-residue stretch at 289 to 364 (HCVHMRGLPY…RYVELFLNST (76 aa)) folds into the RRM 3 domain. At Ser310 the chain carries Phosphoserine. Repeat copies occupy residues 354–372 (HRYVELFLNSTAGTSGGAY), 374–392 (HSYVELFLNSTAGASGGAY), and 418–433 (GGYGGGYGGQSSMSGY). The 2 X 19 AA perfect repeats stretch occupies residues 354-392 (HRYVELFLNSTAGTSGGAYDHSYVELFLNSTAGASGGAY).

In terms of assembly, component of a ribonucleoprotein complex containing mRNAs and RNA-binding proteins including DDX5, HNRNPH2 and SRSF1 as well as splicing regulator ARVCF. Interacts with TXNL4/DIM1.

Its subcellular location is the nucleus. It localises to the nucleoplasm. This protein is a component of the heterogeneous nuclear ribonucleoprotein (hnRNP) complexes which provide the substrate for the processing events that pre-mRNAs undergo before becoming functional, translatable mRNAs in the cytoplasm. Binds poly(RG). This chain is Heterogeneous nuclear ribonucleoprotein H2 (Hnrnph2), found in Mus musculus (Mouse).